Reading from the N-terminus, the 160-residue chain is Outer membrane protein MT2024.1 (160 aa).

Residues 1–22 (MSWSRVIAYGLLPGLALALTCG) form the signal peptide.

It is found in the cell outer membrane. The polypeptide is Outer membrane protein MT2024.1 (Mycobacterium tuberculosis (strain CDC 1551 / Oshkosh)).